A 336-amino-acid chain; its full sequence is Gibberellin 2-beta-dioxygenase 7 (336 aa).

Residues 191–291 (LENSFLRLNK…RMSIAFFVCP (101 aa)) form the Fe2OG dioxygenase domain. Histidine 216, aspartate 218, and histidine 272 together coordinate Fe cation. Arginine 282 is a catalytic residue. Position 282 (arginine 282) interacts with 2-oxoglutarate.

This sequence belongs to the iron/ascorbate-dependent oxidoreductase family. GA2OX subfamily. It depends on Fe(2+) as a cofactor.

The enzyme catalyses gibberellin A1 + 2-oxoglutarate + O2 = gibberellin A8 + succinate + CO2. Its pathway is plant hormone biosynthesis; gibberellin biosynthesis. Functionally, catalyzes the 2-beta-hydroxylation of gibberellins (GA) precursors, rendering them unable to be converted to active GAs. Hydroxylates the C20-GA GA12 and GA53, but is not active on C19-GAs, like GA1, GA4, GA9 and GA20. The polypeptide is Gibberellin 2-beta-dioxygenase 7 (GA2OX7) (Arabidopsis thaliana (Mouse-ear cress)).